The primary structure comprises 110 residues: Minor capsid protein VP2 (110 aa).

It belongs to the vesivirus VP2 protein family. Homooligomer. The portal-like structure consists in 12 copies of VP2. Interacts with capsid protein VP1.

The protein resides in the virion. The protein localises to the host cytoplasm. In terms of biological role, minor structural protein that forms a portal-like structure at a unique three-fold axis of symmetry, following binding to the host receptor. The channel formed by VP2 may allow the delivery of the viral genome through the host endosomal membrane. In Vesicular exanthema of swine virus serotype A48 (isolate Swine/United States/A48/1948) (VESV), this protein is Minor capsid protein VP2.